A 968-amino-acid polypeptide reads, in one-letter code: RNA polymerase-associated protein RapA (968 aa).

The 171-residue stretch at Glu164–Asn334 folds into the Helicase ATP-binding domain. Residue Asp177–Thr184 participates in ATP binding. Positions Asp280–His283 match the DEAH box motif. One can recognise a Helicase C-terminal domain in the interval Arg490–Asp664.

The protein belongs to the SNF2/RAD54 helicase family. RapA subfamily. As to quaternary structure, interacts with the RNAP. Has a higher affinity for the core RNAP than for the holoenzyme. Its ATPase activity is stimulated by binding to RNAP.

Its function is as follows. Transcription regulator that activates transcription by stimulating RNA polymerase (RNAP) recycling in case of stress conditions such as supercoiled DNA or high salt concentrations. Probably acts by releasing the RNAP, when it is trapped or immobilized on tightly supercoiled DNA. Does not activate transcription on linear DNA. Probably not involved in DNA repair. This is RNA polymerase-associated protein RapA from Serratia proteamaculans (strain 568).